A 188-amino-acid chain; its full sequence is RWD domain-containing protein 4 (188 aa).

Residues 9-111 (MELEALRSIY…EYAKDHKEQF (103 aa)) form the RWD domain. The interval 132–167 (TPTTAPSSKKKEKKEQLSKAQKRKLADKTDHKGELP) is disordered. A compositionally biased stretch (basic and acidic residues) spans 155-166 (KLADKTDHKGEL).

The sequence is that of RWD domain-containing protein 4 (Rwdd4) from Mus musculus (Mouse).